The chain runs to 111 residues: Large ribosomal subunit protein uL22 (111 aa).

This sequence belongs to the universal ribosomal protein uL22 family. As to quaternary structure, part of the 50S ribosomal subunit.

In terms of biological role, this protein binds specifically to 23S rRNA; its binding is stimulated by other ribosomal proteins, e.g. L4, L17, and L20. It is important during the early stages of 50S assembly. It makes multiple contacts with different domains of the 23S rRNA in the assembled 50S subunit and ribosome. Its function is as follows. The globular domain of the protein is located near the polypeptide exit tunnel on the outside of the subunit, while an extended beta-hairpin is found that lines the wall of the exit tunnel in the center of the 70S ribosome. This Pelobacter propionicus (strain DSM 2379 / NBRC 103807 / OttBd1) protein is Large ribosomal subunit protein uL22.